Consider the following 190-residue polypeptide: Peptidyl-tRNA hydrolase (190 aa).

Phe-14 is a binding site for tRNA. His-19 functions as the Proton acceptor in the catalytic mechanism. Residues Met-64, Asn-66, and Asn-112 each coordinate tRNA.

The protein belongs to the PTH family. Monomer.

The protein resides in the cytoplasm. It catalyses the reaction an N-acyl-L-alpha-aminoacyl-tRNA + H2O = an N-acyl-L-amino acid + a tRNA + H(+). Its function is as follows. Hydrolyzes ribosome-free peptidyl-tRNAs (with 1 or more amino acids incorporated), which drop off the ribosome during protein synthesis, or as a result of ribosome stalling. Functionally, catalyzes the release of premature peptidyl moieties from peptidyl-tRNA molecules trapped in stalled 50S ribosomal subunits, and thus maintains levels of free tRNAs and 50S ribosomes. This is Peptidyl-tRNA hydrolase from Staphylococcus saprophyticus subsp. saprophyticus (strain ATCC 15305 / DSM 20229 / NCIMB 8711 / NCTC 7292 / S-41).